Here is a 216-residue protein sequence, read N- to C-terminus: Peptide deformylase (216 aa).

Positions 134 and 178 each coordinate Fe cation. Residue E179 is part of the active site. Fe cation is bound at residue H182.

The protein belongs to the polypeptide deformylase family. Requires Fe(2+) as cofactor.

It catalyses the reaction N-terminal N-formyl-L-methionyl-[peptide] + H2O = N-terminal L-methionyl-[peptide] + formate. Removes the formyl group from the N-terminal Met of newly synthesized proteins. Requires at least a dipeptide for an efficient rate of reaction. N-terminal L-methionine is a prerequisite for activity but the enzyme has broad specificity at other positions. This is Peptide deformylase from Mycoplasma pneumoniae (strain ATCC 29342 / M129 / Subtype 1) (Mycoplasmoides pneumoniae).